A 249-amino-acid polypeptide reads, in one-letter code: Small ribosomal subunit protein eS6 (249 aa).

The segment covering 223–238 (LRQRDHSKKHTQKVHA) has biased composition (basic residues). Positions 223–249 (LRQRDHSKKHTQKVHAQRAEVAAFQKK) are disordered.

It belongs to the eukaryotic ribosomal protein eS6 family. As to quaternary structure, component of the small ribosomal subunit. Part of the small subunit (SSU) processome, composed of more than 70 proteins and the RNA chaperone small nucleolar RNA (snoRNA) U3. In terms of processing, ribosomal protein S6 is the major substrate of protein kinases in eukaryote ribosomes.

It is found in the cytoplasm. Its subcellular location is the nucleus. The protein resides in the nucleolus. Component of the 40S small ribosomal subunit. Plays an important role in controlling cell growth and proliferation through the selective translation of particular classes of mRNA. Part of the small subunit (SSU) processome, first precursor of the small eukaryotic ribosomal subunit. During the assembly of the SSU processome in the nucleolus, many ribosome biogenesis factors, an RNA chaperone and ribosomal proteins associate with the nascent pre-rRNA and work in concert to generate RNA folding, modifications, rearrangements and cleavage as well as targeted degradation of pre-ribosomal RNA by the RNA exosome. The protein is Small ribosomal subunit protein eS6 (RPS6) of Leishmania infantum.